We begin with the raw amino-acid sequence, 361 residues long: Geranylgeranyl pyrophosphate synthase 3 (361 aa).

The interval 44–63 is disordered; the sequence is DSNGSKELAPNGAQSRVQKP. Isopentenyl diphosphate is bound by residues lysine 81, arginine 84, and histidine 113. Positions 120 and 124 each coordinate Mg(2+). Arginine 129 serves as a coordination point for dimethylallyl diphosphate. Arginine 130 is a binding site for isopentenyl diphosphate. 3 residues coordinate dimethylallyl diphosphate: lysine 207, threonine 208, and glutamine 244. Aspartate 247 is a binding site for Mg(2+). Dimethylallyl diphosphate-binding residues include asparagine 251, lysine 261, and lysine 271.

It belongs to the FPP/GGPP synthase family. Requires Mg(2+) as cofactor.

The catalysed reaction is isopentenyl diphosphate + dimethylallyl diphosphate = (2E)-geranyl diphosphate + diphosphate. It carries out the reaction isopentenyl diphosphate + (2E)-geranyl diphosphate = (2E,6E)-farnesyl diphosphate + diphosphate. It catalyses the reaction isopentenyl diphosphate + (2E,6E)-farnesyl diphosphate = (2E,6E,10E)-geranylgeranyl diphosphate + diphosphate. Geranylgeranyl pyrophosphate synthase; part of the gene cluster 25 that mediates the biosynthesis of an isoprenoid secondary metabolite. In Zymoseptoria tritici (strain CBS 115943 / IPO323) (Speckled leaf blotch fungus), this protein is Geranylgeranyl pyrophosphate synthase 3 (GGS3).